The primary structure comprises 262 residues: 26 kDa secreted antigen (262 aa).

An N-terminal signal peptide occupies residues 1 to 21; it reads MSVVHKACLIALLFVSSGVAQ. ShKT domains follow at residues 23 to 57 and 59 to 93; these read CMDS…CNTC and CRDE…CGLC. 6 disulfide bridges follow: cysteine 23–cysteine 57, cysteine 30–cysteine 50, cysteine 37–cysteine 54, cysteine 59–cysteine 93, cysteine 66–cysteine 86, and cysteine 73–cysteine 90.

The protein belongs to the phosphatidylethanolamine-binding protein family.

The protein resides in the secreted. Functionally, binds phosphatidylethanolamine. This Toxocara canis (Canine roundworm) protein is 26 kDa secreted antigen (TES-26).